A 343-amino-acid chain; its full sequence is N-acetyl-gamma-glutamyl-phosphate reductase (343 aa).

The active site involves Cys149.

This sequence belongs to the NAGSA dehydrogenase family. Type 1 subfamily.

Its subcellular location is the cytoplasm. The enzyme catalyses N-acetyl-L-glutamate 5-semialdehyde + phosphate + NADP(+) = N-acetyl-L-glutamyl 5-phosphate + NADPH + H(+). It functions in the pathway amino-acid biosynthesis; L-arginine biosynthesis; N(2)-acetyl-L-ornithine from L-glutamate: step 3/4. In terms of biological role, catalyzes the NADPH-dependent reduction of N-acetyl-5-glutamyl phosphate to yield N-acetyl-L-glutamate 5-semialdehyde. The polypeptide is N-acetyl-gamma-glutamyl-phosphate reductase (Exiguobacterium sibiricum (strain DSM 17290 / CCUG 55495 / CIP 109462 / JCM 13490 / 255-15)).